Here is a 479-residue protein sequence, read N- to C-terminus: Glycogen synthase (479 aa).

Lysine 15 contacts ADP-alpha-D-glucose.

The protein belongs to the glycosyltransferase 1 family. Bacterial/plant glycogen synthase subfamily.

It carries out the reaction [(1-&gt;4)-alpha-D-glucosyl](n) + ADP-alpha-D-glucose = [(1-&gt;4)-alpha-D-glucosyl](n+1) + ADP + H(+). Its pathway is glycan biosynthesis; glycogen biosynthesis. Synthesizes alpha-1,4-glucan chains using ADP-glucose. This is Glycogen synthase from Histophilus somni (strain 129Pt) (Haemophilus somnus).